Here is a 118-residue protein sequence, read N- to C-terminus: Superoxide-generating NADPH oxidase light chain subunit (118 aa).

A run of 4 helical transmembrane segments spans residues 9 to 29, 36 to 56, 62 to 82, and 83 to 103; these read WAAMIGMAACWCLIAGGIMGI, IAIYSICVGGVLYPLLYPLSF, AIFHQYYVAAALMAGLSVLCY, and FLVPTMLAAMVMDISAVVFLI.

The protein belongs to the p22phox family. As to quaternary structure, composed of a heavy chain and a light chain.

It localises to the cell membrane. Its function is as follows. Critical component of the membrane-bound oxidase of phagocytes that generates superoxide. The polypeptide is Superoxide-generating NADPH oxidase light chain subunit (cybA) (Dictyostelium discoideum (Social amoeba)).